The primary structure comprises 115 residues: Large ribosomal subunit protein bL20c (115 aa).

It belongs to the bacterial ribosomal protein bL20 family.

It localises to the plastid. It is found in the organellar chromatophore. Its function is as follows. Binds directly to 23S ribosomal RNA and is necessary for the in vitro assembly process of the 50S ribosomal subunit. It is not involved in the protein synthesizing functions of that subunit. The chain is Large ribosomal subunit protein bL20c from Paulinella chromatophora.